Consider the following 338-residue polypeptide: Diacylglycerol acyltransferase/mycolyltransferase Ag85A (338 aa).

An N-terminal signal peptide occupies residues 1–42 (MQLVDRVRGAVTGMSRRLVVGAVGAALVSGLVGAVGGTATAG). A substrate-binding site is contributed by 85 to 86 (LR). Residues 101 to 111 (FEWYDQSGLSV) form a fibronectin-binding region. Cys130 and Cys135 are joined by a disulfide. Substrate-binding residues include Ser169 and Asp197. Catalysis depends on Ser169, which acts as the Nucleophile. The active site involves Glu273. Substrate is bound by residues 275-278 (FVRT), Lys282, and 305-307 (HSW). His305 is an active-site residue.

It belongs to the mycobacterial A85 antigen family. In terms of assembly, homodimer.

The protein resides in the secreted. It is found in the cell wall. It localises to the cytoplasm. It carries out the reaction an acyl-CoA + a 1,2-diacyl-sn-glycerol = a triacyl-sn-glycerol + CoA. The enzyme catalyses 2 alpha,alpha'-trehalose 6-mycolate = alpha,alpha'-trehalose 6,6'-bismycolate + alpha,alpha-trehalose. Functionally, the antigen 85 proteins (FbpA, FbpB, FbpC) are responsible for the high affinity of mycobacteria for fibronectin, a large adhesive glycoprotein, which facilitates the attachment of M.tuberculosis to murine alveolar macrophages (AMs). They also help to maintain the integrity of the cell wall by catalyzing the transfer of mycolic acids to cell wall arabinogalactan, and through the synthesis of alpha,alpha-trehalose dimycolate (TDM, cord factor). They catalyze the transfer of a mycoloyl residue from one molecule of alpha,alpha-trehalose monomycolate (TMM) to another TMM, leading to the formation of TDM. FbpA mediates triacylglycerol (TAG) formation with long-chain acyl-CoA as the acyl donor and 1,2-dipalmitoyl-sn-glycerol (1,2-dipalmitin) as the acyl acceptor. It has a preference for C26:0-CoA over C18:1-CoA. In Mycobacterium bovis (strain ATCC BAA-935 / AF2122/97), this protein is Diacylglycerol acyltransferase/mycolyltransferase Ag85A (fbpA).